We begin with the raw amino-acid sequence, 598 residues long: Centrosomal protein of 70 kDa (598 aa).

Positions 16–38 are enriched in polar residues; it reads DSTKEPLSTVTSQAQDSSLSANR. Positions 16–43 are disordered; sequence DSTKEPLSTVTSQAQDSSLSANRPVTEK. 2 coiled-coil regions span residues 99-210 and 255-317; these read TRQQ…EEDR and TYKG…NIKL. The TPR repeat unit spans residues 484–517; sequence NGVYPRMNEVYARLGEMNNAVRNLQELLGLDSSS.

In terms of assembly, directly interacts with tubulin-gamma; this interaction determines centrosomal localization.

The protein resides in the cytoplasm. The protein localises to the cytoskeleton. It is found in the microtubule organizing center. Its subcellular location is the centrosome. In terms of biological role, plays a role in the organization of both preexisting and nascent microtubules in interphase cells. During mitosis, required for the organization and orientation of the mitotic spindle. In Rattus norvegicus (Rat), this protein is Centrosomal protein of 70 kDa (Cep70).